Consider the following 462-residue polypeptide: uncharacterized protein (462 aa).

The HTH gntR-type domain maps to 22 to 90 (KPIYKALAGQ…VGSGTFVSYD (69 aa)). Residues 50–69 (QRELADYLDLNVSTISKAFK) constitute a DNA-binding region (H-T-H motif). Lys-308 is subject to N6-(pyridoxal phosphate)lysine.

It in the C-terminal section; belongs to the class-I pyridoxal-phosphate-dependent aminotransferase family. Pyridoxal 5'-phosphate is required as a cofactor.

This is an uncharacterized protein from Bacillus subtilis (strain 168).